We begin with the raw amino-acid sequence, 464 residues long: ATP-dependent protease ATPase subunit HslU (464 aa).

ATP is bound by residues Val18, 60-65, Asp277, Glu342, and Arg414; that span reads GVGKTE.

It belongs to the ClpX chaperone family. HslU subfamily. As to quaternary structure, a double ring-shaped homohexamer of HslV is capped on each side by a ring-shaped HslU homohexamer. The assembly of the HslU/HslV complex is dependent on binding of ATP.

The protein localises to the cytoplasm. Functionally, ATPase subunit of a proteasome-like degradation complex; this subunit has chaperone activity. The binding of ATP and its subsequent hydrolysis by HslU are essential for unfolding of protein substrates subsequently hydrolyzed by HslV. HslU recognizes the N-terminal part of its protein substrates and unfolds these before they are guided to HslV for hydrolysis. The protein is ATP-dependent protease ATPase subunit HslU of Lactobacillus delbrueckii subsp. bulgaricus (strain ATCC BAA-365 / Lb-18).